Reading from the N-terminus, the 49-residue chain is Small ribosomal subunit protein uS19c (49 aa).

The protein belongs to the universal ribosomal protein uS19 family.

Its subcellular location is the plastid. The protein resides in the chloroplast. Its function is as follows. Protein S19 forms a complex with S13 that binds strongly to the 16S ribosomal RNA. The polypeptide is Small ribosomal subunit protein uS19c (rps19) (Sinapis alba (White mustard)).